The sequence spans 137 residues: Large ribosomal subunit protein uL16 (137 aa).

The protein belongs to the universal ribosomal protein uL16 family. In terms of assembly, part of the 50S ribosomal subunit.

Its function is as follows. Binds 23S rRNA and is also seen to make contacts with the A and possibly P site tRNAs. The sequence is that of Large ribosomal subunit protein uL16 from Xylella fastidiosa (strain M23).